Here is a 756-residue protein sequence, read N- to C-terminus: Ent-kaur-16-ene synthase, chloroplastic (756 aa).

Aspartate 496, aspartate 500, asparagine 639, and glutamate 647 together coordinate Mg(2+). A DDXXD motif motif is present at residues 496-500; it reads DDFFD.

This sequence belongs to the terpene synthase family. Mg(2+) serves as cofactor. In terms of tissue distribution, highly expressed in panicles and at lower levels in leaves and stems.

The protein localises to the plastid. Its subcellular location is the chloroplast. The catalysed reaction is ent-copalyl diphosphate = ent-kaur-16-ene + diphosphate. It functions in the pathway plant hormone biosynthesis; gibberellin biosynthesis. Catalyzes the conversion of ent-copalyl diphosphate to the gibberellin precursor ent-kaur-16-ene. This Oryza sativa subsp. japonica (Rice) protein is Ent-kaur-16-ene synthase, chloroplastic (KS1).